A 296-amino-acid chain; its full sequence is Cytidine deaminase (296 aa).

2 CMP/dCMP-type deaminase domains span residues 48–168 (DADA…FGPV) and 187–296 (QNMN…FIEE). 89–91 (NME) is a binding site for substrate. His102 contacts Zn(2+). Catalysis depends on Glu104, which acts as the Proton donor. Zn(2+)-binding residues include Cys129 and Cys132.

Belongs to the cytidine and deoxycytidylate deaminase family. Homodimer. It depends on Zn(2+) as a cofactor.

It carries out the reaction cytidine + H2O + H(+) = uridine + NH4(+). The enzyme catalyses 2'-deoxycytidine + H2O + H(+) = 2'-deoxyuridine + NH4(+). Functionally, this enzyme scavenges exogenous and endogenous cytidine and 2'-deoxycytidine for UMP synthesis. The sequence is that of Cytidine deaminase from Pectobacterium carotovorum subsp. carotovorum (strain PC1).